Here is a 102-residue protein sequence, read N- to C-terminus: Small ribosomal subunit protein uS10 (102 aa).

This sequence belongs to the universal ribosomal protein uS10 family. In terms of assembly, part of the 30S ribosomal subunit.

Functionally, involved in the binding of tRNA to the ribosomes. The chain is Small ribosomal subunit protein uS10 from Rhodopseudomonas palustris (strain HaA2).